Reading from the N-terminus, the 255-residue chain is MAADIRVFTCLSDNFGYLIHDPATGATASVDAPEAGPIVRQLEANGWTLTDILITHHHYDHVGGVAELKQRYGCRVIGPHDRKAAIADVDLRVAHGDVVKVGELLARVLETPGHTLDHVSYVFDADKAVFAADTLFSIGCGRVFEGTYPMMWDSLLKLRTLPDDFRLYCGHEYTASNVKFALTVDPDNEALKARAAEVTRLRAANQPTIPVLLGEEKQANVFLRADDPAIAVRLRMKGASAEEVFGELRERKNKS.

Zn(2+) contacts are provided by histidine 56, histidine 58, aspartate 60, histidine 61, histidine 114, aspartate 133, and histidine 171.

It belongs to the metallo-beta-lactamase superfamily. Glyoxalase II family. Monomer. Zn(2+) is required as a cofactor.

It catalyses the reaction an S-(2-hydroxyacyl)glutathione + H2O = a 2-hydroxy carboxylate + glutathione + H(+). Its pathway is secondary metabolite metabolism; methylglyoxal degradation; (R)-lactate from methylglyoxal: step 2/2. Functionally, thiolesterase that catalyzes the hydrolysis of S-D-lactoyl-glutathione to form glutathione and D-lactic acid. The sequence is that of Hydroxyacylglutathione hydrolase from Bradyrhizobium sp. (strain ORS 278).